Consider the following 352-residue polypeptide: Guanine nucleotide-binding protein alpha-7 subunit (352 aa).

Residue G2 is the site of N-myristoyl glycine attachment. C4 carries S-palmitoyl cysteine lipidation. The region spanning 32-352 is the G-alpha domain; sequence RIIKLLLLGA…AKNLKSMGLC (321 aa). Residues 35-48 are G1 motif; the sequence is KLLLLGAGESGKST. GTP-binding positions include 40–47, 174–180, 199–203, 268–271, and A324; these read GAGESGKS, LRTRIKT, DVGGQ, and NKKD. The Mg(2+) site is built by S47 and T180. The segment at 172-180 is G2 motif; that stretch reads DLLRTRIKT. Positions 195–204 are G3 motif; that stretch reads FRVIDVGGQR. A G4 motif region spans residues 264–271; that stretch reads ILFLNKKD. The segment at 322 to 327 is G5 motif; that stretch reads TCATDT.

The protein belongs to the G-alpha family. G(i/o/t/z) subfamily. As to quaternary structure, g proteins are composed of 3 units; alpha, beta and gamma. The alpha chain contains the guanine nucleotide binding site.

In terms of biological role, guanine nucleotide-binding proteins (G proteins) are involved as modulators or transducers in various transmembrane signaling systems. The sequence is that of Guanine nucleotide-binding protein alpha-7 subunit (gpa-7) from Caenorhabditis elegans.